Reading from the N-terminus, the 315-residue chain is Thymidylate synthase (315 aa).

DUMP is bound by residues arginine 22 and 177–178 (RR). Catalysis depends on cysteine 197, which acts as the Nucleophile. Residues 217–220 (RSAD), asparagine 228, and 258–260 (HLY) contribute to the dUMP site. (6R)-5,10-methylene-5,6,7,8-tetrahydrofolate is bound at residue aspartate 220. Alanine 314 serves as a coordination point for (6R)-5,10-methylene-5,6,7,8-tetrahydrofolate.

This sequence belongs to the thymidylate synthase family. Bacterial-type ThyA subfamily. As to quaternary structure, homodimer.

Its subcellular location is the cytoplasm. It catalyses the reaction dUMP + (6R)-5,10-methylene-5,6,7,8-tetrahydrofolate = 7,8-dihydrofolate + dTMP. It participates in pyrimidine metabolism; dTTP biosynthesis. Catalyzes the reductive methylation of 2'-deoxyuridine-5'-monophosphate (dUMP) to 2'-deoxythymidine-5'-monophosphate (dTMP) while utilizing 5,10-methylenetetrahydrofolate (mTHF) as the methyl donor and reductant in the reaction, yielding dihydrofolate (DHF) as a by-product. This enzymatic reaction provides an intracellular de novo source of dTMP, an essential precursor for DNA biosynthesis. The protein is Thymidylate synthase of Enterococcus faecalis (strain ATCC 700802 / V583).